The sequence spans 61 residues: Small ribosomal subunit protein uS14 (61 aa).

The Zn(2+) site is built by Cys-24, Cys-27, Cys-40, and Cys-43.

The protein belongs to the universal ribosomal protein uS14 family. Zinc-binding uS14 subfamily. As to quaternary structure, part of the 30S ribosomal subunit. Contacts proteins S3 and S10. Zn(2+) is required as a cofactor.

Its function is as follows. Binds 16S rRNA, required for the assembly of 30S particles and may also be responsible for determining the conformation of the 16S rRNA at the A site. The sequence is that of Small ribosomal subunit protein uS14 from Alkaliphilus oremlandii (strain OhILAs) (Clostridium oremlandii (strain OhILAs)).